A 65-amino-acid polypeptide reads, in one-letter code: Large ribosomal subunit protein uL29 (65 aa).

This sequence belongs to the universal ribosomal protein uL29 family.

This is Large ribosomal subunit protein uL29 from Mycoplasmopsis pulmonis (strain UAB CTIP) (Mycoplasma pulmonis).